Consider the following 546-residue polypeptide: Glucose-6-phosphate isomerase (546 aa).

E358 functions as the Proton donor in the catalytic mechanism. Active-site residues include H389 and K504.

Belongs to the GPI family.

Its subcellular location is the cytoplasm. It catalyses the reaction alpha-D-glucose 6-phosphate = beta-D-fructose 6-phosphate. The protein operates within carbohydrate biosynthesis; gluconeogenesis. It participates in carbohydrate degradation; glycolysis; D-glyceraldehyde 3-phosphate and glycerone phosphate from D-glucose: step 2/4. In terms of biological role, catalyzes the reversible isomerization of glucose-6-phosphate to fructose-6-phosphate. The protein is Glucose-6-phosphate isomerase of Desulfosudis oleivorans (strain DSM 6200 / JCM 39069 / Hxd3) (Desulfococcus oleovorans).